Consider the following 731-residue polypeptide: Inclusion body clearance protein IML2 (731 aa).

Residues 1–26 (MFRVFGSFGSKGNQSSGEEQSTKTKQ) are disordered. Residues 10–26 (SKGNQSSGEEQSTKTKQ) show a composition bias toward polar residues. Phosphoserine occurs at positions 265, 268, and 378. Thr380 is subject to Phosphothreonine. Residues Ser383 and Ser392 each carry the phosphoserine modification.

This sequence belongs to the IML2 family. In terms of assembly, interacts with lipid droplet proteins PET10 and PDR16.

It is found in the cytoplasm. The protein resides in the nucleus. Its function is as follows. Inclusion body (IB) resident protein that interacts strongly with lipid droplet (LD) proteins. Involved in LD-mediated IB clearing after protein folding stress, probably by enabling access to the IBs of an LD-stored soluble sterol derivative that acts as a chaperone in inclusion clearing. This is Inclusion body clearance protein IML2 (IML2) from Saccharomyces cerevisiae (strain YJM789) (Baker's yeast).